The following is a 425-amino-acid chain: Gamma-glutamyl phosphate reductase (425 aa).

This sequence belongs to the gamma-glutamyl phosphate reductase family.

Its subcellular location is the cytoplasm. The catalysed reaction is L-glutamate 5-semialdehyde + phosphate + NADP(+) = L-glutamyl 5-phosphate + NADPH + H(+). The protein operates within amino-acid biosynthesis; L-proline biosynthesis; L-glutamate 5-semialdehyde from L-glutamate: step 2/2. Its function is as follows. Catalyzes the NADPH-dependent reduction of L-glutamate 5-phosphate into L-glutamate 5-semialdehyde and phosphate. The product spontaneously undergoes cyclization to form 1-pyrroline-5-carboxylate. This chain is Gamma-glutamyl phosphate reductase, found in Xylella fastidiosa (strain M23).